Reading from the N-terminus, the 128-residue chain is Small ribosomal subunit protein eS8 (128 aa).

The protein belongs to the eukaryotic ribosomal protein eS8 family. Part of the 30S ribosomal subunit.

In Methanococcus maripaludis (strain C6 / ATCC BAA-1332), this protein is Small ribosomal subunit protein eS8.